The chain runs to 475 residues: Lipid II flippase MurJ (475 aa).

The Cytoplasmic segment spans residues 1 to 2; it reads MS. Residues 3 to 23 traverse the membrane as a helical segment; that stretch reads ILFSSILFSIATFFSRILGLF. The Periplasmic portion of the chain corresponds to 24-35; that stretch reads RDVLFAKYFGVS. A helical transmembrane segment spans residues 36 to 56; it reads YELDAYFIAIMFPFFLRKVFG. The Cytoplasmic segment spans residues 57–78; the sequence is EGAMSSAFVPLYSEKSGEEKDK. Residues 79-99 traverse the membrane as a helical segment; the sequence is FLSSVINGFSLIILALVILSY. The Periplasmic portion of the chain corresponds to 100-123; that stretch reads FFPELIINLFGAGSSHETKILAKK. Residues 124–144 traverse the membrane as a helical segment; the sequence is LLLITSPSIYFIFLWAISYSI. Topologically, residues 145–150 are cytoplasmic; sequence LNTNNK. Residues 151 to 171 traverse the membrane as a helical segment; the sequence is FFWPALTPSISNITIIIGTFL. At 172–175 the chain is on the periplasmic side; the sequence is STKY. The helical transmembrane segment at 176 to 196 threads the bilayer; it reads GIISPTIGFLIGSILMFFSII. The Cytoplasmic segment spans residues 197-213; sequence KSIIKHKYYFTIKHFPH. The helical transmembrane segment at 214 to 238 threads the bilayer; sequence FLKLFFPTFMTMVVSQINTVVDMNV. The Periplasmic segment spans residues 239-249; sequence VSFYDKGSISY. A helical membrane pass occupies residues 250 to 271; sequence LQYASRFYLLPYGLFAVSVSTV. Residues 272-287 lie on the Cytoplasmic side of the membrane; the sequence is VLSKISNDRKNFNYHL. Residues 288–308 traverse the membrane as a helical segment; sequence NDALKTTLFFTIPSMVGLIFL. At 309–332 the chain is on the periplasmic side; sequence STPIIRFFYEHGAFTSKDTLITSK. A helical membrane pass occupies residues 333–353; it reads ILIAYTLGLPFYGIYSTISRS. Topologically, residues 354 to 362 are cytoplasmic; the sequence is YHAIKNTKT. The helical transmembrane segment at 363 to 383 threads the bilayer; the sequence is PFIAATIVSLSNIILDIIFGL. Residues 384–386 lie on the Periplasmic side of the membrane; that stretch reads KYG. Residues 387–407 form a helical membrane-spanning segment; sequence PIGVALATSIAGIIGVLYLLF. At 408–416 the chain is on the cytoplasmic side; it reads SVKTFPIKD. A helical transmembrane segment spans residues 417–437; the sequence is FLKISLNSLIMLFVIYLTDFT. Over 438-440 the chain is Periplasmic; sequence DNE. Residues 441–461 form a helical membrane-spanning segment; that stretch reads FWFLIQILIGILVYLIFSSIF. At 462–475 the chain is on the cytoplasmic side; it reads YRDLIRRFLYARKK.

The protein belongs to the MurJ/MviN family.

The protein resides in the cell inner membrane. It participates in cell wall biogenesis; peptidoglycan biosynthesis. In terms of biological role, involved in peptidoglycan biosynthesis. Transports lipid-linked peptidoglycan precursors from the inner to the outer leaflet of the cytoplasmic membrane. The polypeptide is Lipid II flippase MurJ (Thermosipho africanus (strain TCF52B)).